The sequence spans 216 residues: Triosephosphate isomerase (216 aa).

7-9 (NLK) provides a ligand contact to substrate. H89 acts as the Electrophile in catalysis. The active-site Proton acceptor is the E137. Substrate-binding positions include I142, G175, and 196-197 (AS).

It belongs to the triosephosphate isomerase family. In terms of assembly, homotetramer; dimer of dimers.

The protein resides in the cytoplasm. It catalyses the reaction D-glyceraldehyde 3-phosphate = dihydroxyacetone phosphate. The protein operates within carbohydrate biosynthesis; gluconeogenesis. Its pathway is carbohydrate degradation; glycolysis; D-glyceraldehyde 3-phosphate from glycerone phosphate: step 1/1. In terms of biological role, involved in the gluconeogenesis. Catalyzes stereospecifically the conversion of dihydroxyacetone phosphate (DHAP) to D-glyceraldehyde-3-phosphate (G3P). This Thermoplasma acidophilum (strain ATCC 25905 / DSM 1728 / JCM 9062 / NBRC 15155 / AMRC-C165) protein is Triosephosphate isomerase.